The sequence spans 661 residues: tRNA uridine 5-carboxymethylaminomethyl modification enzyme MnmG (661 aa).

Residue 13 to 18 coordinates FAD; that stretch reads GGGHAG. 285-299 serves as a coordination point for NAD(+); the sequence is GPRYCPSVEDKINRF.

Belongs to the MnmG family. Homodimer. Heterotetramer of two MnmE and two MnmG subunits. The cofactor is FAD.

The protein localises to the cytoplasm. NAD-binding protein involved in the addition of a carboxymethylaminomethyl (cmnm) group at the wobble position (U34) of certain tRNAs, forming tRNA-cmnm(5)s(2)U34. The sequence is that of tRNA uridine 5-carboxymethylaminomethyl modification enzyme MnmG from Acidovorax sp. (strain JS42).